The primary structure comprises 498 residues: ATP synthase subunit beta, chloroplastic (498 aa).

172 to 179 contacts ATP; that stretch reads GGAGVGKT.

Belongs to the ATPase alpha/beta chains family. F-type ATPases have 2 components, CF(1) - the catalytic core - and CF(0) - the membrane proton channel. CF(1) has five subunits: alpha(3), beta(3), gamma(1), delta(1), epsilon(1). CF(0) has four main subunits: a(1), b(1), b'(1) and c(9-12).

Its subcellular location is the plastid. The protein localises to the chloroplast thylakoid membrane. It carries out the reaction ATP + H2O + 4 H(+)(in) = ADP + phosphate + 5 H(+)(out). Functionally, produces ATP from ADP in the presence of a proton gradient across the membrane. The catalytic sites are hosted primarily by the beta subunits. The protein is ATP synthase subunit beta, chloroplastic of Saccharum hybrid (Sugarcane).